A 291-amino-acid polypeptide reads, in one-letter code: MTSSYLHFPDFDPVIFSIGPVALHWYGLMYLVGFVFAMWLAVRRANRPGSGWTKNEVENLLYAGFLGVFLGGRIGYVLFYNFPLFLDNPLYLFRVWDGGMSFHGGLIGVILVMIIFARRTKRSFFQVSDFIAPLIPFGLGAGRLGNFINGELWGRVDPNFRFAMLFPGSRAEDIALLPSHPQWQPIFDTYGVLPRHPSQLYELALEGVVLFIILNLFIRKPRPMGAVSGLFLIGYGAFRIIVEFFRQPDAQFTGAWVQYISMGQILSIPMIIAGAIMMVWAYRRRPQQHVS.

The next 7 helical transmembrane spans lie at 21-41 (VALH…MWLA), 60-80 (LLYA…VLFY), 96-116 (WDGG…MIIF), 130-150 (FIAP…FING), 198-218 (SQLY…NLFI), 225-245 (GAVS…VEFF), and 260-280 (ISMG…MMVW). Arginine 143 provides a ligand contact to a 1,2-diacyl-sn-glycero-3-phospho-(1'-sn-glycerol).

The protein belongs to the Lgt family.

Its subcellular location is the cell inner membrane. It catalyses the reaction L-cysteinyl-[prolipoprotein] + a 1,2-diacyl-sn-glycero-3-phospho-(1'-sn-glycerol) = an S-1,2-diacyl-sn-glyceryl-L-cysteinyl-[prolipoprotein] + sn-glycerol 1-phosphate + H(+). It participates in protein modification; lipoprotein biosynthesis (diacylglyceryl transfer). In terms of biological role, catalyzes the transfer of the diacylglyceryl group from phosphatidylglycerol to the sulfhydryl group of the N-terminal cysteine of a prolipoprotein, the first step in the formation of mature lipoproteins. The protein is Phosphatidylglycerol--prolipoprotein diacylglyceryl transferase of Salmonella newport (strain SL254).